Here is a 502-residue protein sequence, read N- to C-terminus: Zinc finger protein 3 homolog (502 aa).

2 stretches are compositionally biased toward basic and acidic residues: residues 1-13 (MGTENKEVIPKEE) and 80-93 (PSSEKDRENNESER). 2 disordered regions span residues 1–26 (MGTENKEVIPKEEISEESEPHGSLLE) and 47–103 (LEGH…NLVT). Residues lysine 6 and lysine 11 each participate in a glycyl lysine isopeptide (Lys-Gly) (interchain with G-Cter in SUMO2) cross-link. 13 C2H2-type zinc fingers span residues 141–163 (HTCKECGKAFNQNSHLIQHMRVH), 169–191 (FECKECGKTFGTNSSLRRHLRIH), 197–219 (FACNECGKAFIQSSHLIHHHRIH), 225–247 (YKCEECGKAFSQNSALILHQRIH), 253–275 (YECNECGKTFRVSSQLIQHQRIH), 281–303 (HECNECGKAFKHSSGLIRHQKIH), 309–331 (YLCNECGKGFGQSSELIRHQRIH), 337–359 (YECNECGKTFGQNSEIIRHIRIH), 365–387 (YVCKECGKAFRGNSELLRHERIH), 393–415 (YECFECGKAFRRTSHLIVHQRIH), 421–443 (HQCNECARTFWDNSELLLHQKIH), 449–471 (YECSECEKTFSQHSQLIIHQRIH), and 477–499 (YECQECQKTFSRSSHLLRHQSVH).

It belongs to the krueppel C2H2-type zinc-finger protein family.

The protein resides in the nucleus. Its function is as follows. May be involved in transcriptional regulation. This Homo sapiens (Human) protein is Zinc finger protein 3 homolog (ZFP3).